The sequence spans 118 residues: Large ribosomal subunit protein uL18 (118 aa).

The tract at residues 1–26 (MISKPDKNKIRQKRHRRVRGKLSGTA) is disordered. A compositionally biased stretch (basic residues) spans 10–20 (IRQKRHRRVRG).

It belongs to the universal ribosomal protein uL18 family. In terms of assembly, part of the 50S ribosomal subunit; part of the 5S rRNA/L5/L18/L25 subcomplex. Contacts the 5S and 23S rRNAs.

Functionally, this is one of the proteins that bind and probably mediate the attachment of the 5S RNA into the large ribosomal subunit, where it forms part of the central protuberance. The polypeptide is Large ribosomal subunit protein uL18 (Streptococcus equi subsp. zooepidemicus (strain H70)).